A 401-amino-acid polypeptide reads, in one-letter code: tRNA pseudouridine synthase Pus10 (401 aa).

A THUMP domain is found at 64–195 (ALAKSGHRES…DGSVSVEVMP (132 aa)).

It belongs to the pseudouridine synthase Pus10 family.

The enzyme catalyses uridine(54) in tRNA = pseudouridine(54) in tRNA. It catalyses the reaction uridine(55) in tRNA = pseudouridine(55) in tRNA. In terms of biological role, responsible for synthesis of pseudouridine from uracil-54 and uracil-55 in the psi GC loop of transfer RNAs. This chain is tRNA pseudouridine synthase Pus10, found in Caldivirga maquilingensis (strain ATCC 700844 / DSM 13496 / JCM 10307 / IC-167).